The chain runs to 365 residues: Chloroplast protein FOR GROWTH AND FERTILITY 1 (365 aa).

Disordered regions lie at residues 1 to 30 and 62 to 90; these read MERLLQPSSSSSSISPSKFPSRTSPFLPRL and YTPIGSNTTNNSFNGSPKSDESKPNPGFL. The N-terminal 79 residues, 1–79, are a transit peptide targeting the chloroplast; it reads MERLLQPSSS…TNNSFNGSPK (79 aa). Low complexity-rich tracts occupy residues 7–24 and 62–77; these read PSSSSSSISPSKFPSRTS and YTPIGSNTTNNSFNGS. Transmembrane regions (helical) follow at residues 109 to 129, 139 to 159, 182 to 202, 218 to 238, 274 to 294, 301 to 321, and 345 to 365; these read VILISAVAVLLLNPLLAPPAF, GWLTSAWTGFLAGCLHTLSGP, ALWGCGHDAGQVIFGLLFLLL, IVGLTLVIIGAMGIKEASEIP, GVVHGLQPDALMIVLPALALP, AFLIMFLVGTVIAMGSYTAFI, and LVAIGLGLGIVISPFFGFSLY.

As to expression, mostly expressed in leaves and flowers, to a lower extent, in stems, roots, floral bud, inflorescence and siliques, and, barely, in seedlings.

It localises to the plastid. It is found in the chloroplast membrane. The protein localises to the plastid membrane. Functionally, together with CGF2, essential protein which supports female gametogenesis and embryogenesis, probably by securing local energy supply. The chain is Chloroplast protein FOR GROWTH AND FERTILITY 1 from Arabidopsis thaliana (Mouse-ear cress).